We begin with the raw amino-acid sequence, 205 residues long: Ribosomal RNA small subunit methyltransferase G (205 aa).

S-adenosyl-L-methionine-binding positions include Gly73, Leu78, 124-125, and Arg139; that span reads VE.

Belongs to the methyltransferase superfamily. RNA methyltransferase RsmG family.

The protein resides in the cytoplasm. It catalyses the reaction guanosine(527) in 16S rRNA + S-adenosyl-L-methionine = N(7)-methylguanosine(527) in 16S rRNA + S-adenosyl-L-homocysteine. Functionally, specifically methylates the N7 position of guanine in position 527 of 16S rRNA. The chain is Ribosomal RNA small subunit methyltransferase G from Methylobacillus flagellatus (strain ATCC 51484 / DSM 6875 / VKM B-1610 / KT).